The chain runs to 616 residues: Dihydroxy-acid dehydratase (616 aa).

Position 81 (D81) interacts with Mg(2+). C122 serves as a coordination point for [2Fe-2S] cluster. Positions 123 and 124 each coordinate Mg(2+). An N6-carboxylysine modification is found at K124. A [2Fe-2S] cluster-binding site is contributed by C195. E491 contributes to the Mg(2+) binding site. S517 acts as the Proton acceptor in catalysis.

Belongs to the IlvD/Edd family. In terms of assembly, homodimer. It depends on [2Fe-2S] cluster as a cofactor. The cofactor is Mg(2+).

It carries out the reaction (2R)-2,3-dihydroxy-3-methylbutanoate = 3-methyl-2-oxobutanoate + H2O. The enzyme catalyses (2R,3R)-2,3-dihydroxy-3-methylpentanoate = (S)-3-methyl-2-oxopentanoate + H2O. Its pathway is amino-acid biosynthesis; L-isoleucine biosynthesis; L-isoleucine from 2-oxobutanoate: step 3/4. It functions in the pathway amino-acid biosynthesis; L-valine biosynthesis; L-valine from pyruvate: step 3/4. In terms of biological role, functions in the biosynthesis of branched-chain amino acids. Catalyzes the dehydration of (2R,3R)-2,3-dihydroxy-3-methylpentanoate (2,3-dihydroxy-3-methylvalerate) into 2-oxo-3-methylpentanoate (2-oxo-3-methylvalerate) and of (2R)-2,3-dihydroxy-3-methylbutanoate (2,3-dihydroxyisovalerate) into 2-oxo-3-methylbutanoate (2-oxoisovalerate), the penultimate precursor to L-isoleucine and L-valine, respectively. In Escherichia coli O8 (strain IAI1), this protein is Dihydroxy-acid dehydratase.